The chain runs to 190 residues: Threonylcarbamoyl-AMP synthase (190 aa).

The YrdC-like domain occupies 7–190 (LGSIAQAVDV…ALTGERFRQG (184 aa)).

Belongs to the SUA5 family. TsaC subfamily.

The protein localises to the cytoplasm. It catalyses the reaction L-threonine + hydrogencarbonate + ATP = L-threonylcarbamoyladenylate + diphosphate + H2O. Its function is as follows. Required for the formation of a threonylcarbamoyl group on adenosine at position 37 (t(6)A37) in tRNAs that read codons beginning with adenine. Catalyzes the conversion of L-threonine, HCO(3)(-)/CO(2) and ATP to give threonylcarbamoyl-AMP (TC-AMP) as the acyladenylate intermediate, with the release of diphosphate. The polypeptide is Threonylcarbamoyl-AMP synthase (Enterobacter sp. (strain 638)).